The following is a 423-amino-acid chain: Putative competence-damage inducible protein (423 aa).

This sequence belongs to the CinA family.

The polypeptide is Putative competence-damage inducible protein (Streptococcus equi subsp. equi (strain 4047)).